A 786-amino-acid chain; its full sequence is LPS-assembly protein LptD (786 aa).

The signal sequence occupies residues 1–24 (MKKRIPTLLATMIASALYSHQGLA). Disulfide bonds link C31-C726 and C173-C727.

Belongs to the LptD family. As to quaternary structure, component of the lipopolysaccharide transport and assembly complex. Interacts with LptE and LptA. In terms of processing, contains two intramolecular disulfide bonds.

The protein localises to the cell outer membrane. Together with LptE, is involved in the assembly of lipopolysaccharide (LPS) at the surface of the outer membrane. This Salmonella typhimurium (strain LT2 / SGSC1412 / ATCC 700720) protein is LPS-assembly protein LptD.